Reading from the N-terminus, the 227-residue chain is Pyridoxine-5'-phosphate oxidase (227 aa).

20 to 23 (RKDY) is a pyridoxal 5'-phosphate binding site. 75–78 (RVVL) provides a ligand contact to FMN. Position 80 (lysine 80) interacts with pyridoxal 5'-phosphate. FMN-binding positions include 90–91 (YT), 96–97 (RK), and glutamine 117. Pyridoxal 5'-phosphate-binding residues include tyrosine 135, arginine 139, and serine 143. FMN-binding positions include 152-153 (FQ) and tryptophan 197. Residue 203-205 (RIH) coordinates pyridoxal 5'-phosphate. Arginine 207 contacts FMN.

Belongs to the pyridoxamine 5'-phosphate oxidase family. In terms of assembly, homodimer. The cofactor is FMN.

The catalysed reaction is pyridoxamine 5'-phosphate + O2 + H2O = pyridoxal 5'-phosphate + H2O2 + NH4(+). The enzyme catalyses pyridoxine 5'-phosphate + O2 = pyridoxal 5'-phosphate + H2O2. Its pathway is cofactor metabolism; pyridoxal 5'-phosphate salvage; pyridoxal 5'-phosphate from pyridoxamine 5'-phosphate: step 1/1. It participates in cofactor metabolism; pyridoxal 5'-phosphate salvage; pyridoxal 5'-phosphate from pyridoxine 5'-phosphate: step 1/1. Catalyzes the oxidation of either pyridoxine 5'-phosphate (PNP) or pyridoxamine 5'-phosphate (PMP) into pyridoxal 5'-phosphate (PLP). The chain is Pyridoxine-5'-phosphate oxidase (pnpo) from Dictyostelium discoideum (Social amoeba).